Consider the following 403-residue polypeptide: Creatinase (403 aa).

The active site involves H232.

This sequence belongs to the peptidase M24 family. Creatinase subfamily. As to quaternary structure, homodimer.

It carries out the reaction creatine + H2O = sarcosine + urea. This chain is Creatinase, found in Pseudomonas putida (Arthrobacter siderocapsulatus).